The following is a 192-amino-acid chain: MKIRNATFYKSVSAIDHLPKEQLPEIVFVGRSNVGKSTLLNSLTARKGLAKTSSTPGKTQLINYFVINESCYFVDLPGYGYAKVDKGKKYEWGKLLSHYVSTRDSITLVVLLIDSRHPDMESDHLMAEFLEHCGRPYGVVLTKYDKLKQQAKAAARLAVKSYSLKSKFIVNYSAISGQGKEELLEQLAIYTG.

In terms of domain architecture, EngB-type G spans 22-192 (QLPEIVFVGR…LLEQLAIYTG (171 aa)). GTP-binding positions include 30-37 (GRSNVGKS), 57-61 (GKTQL), 75-78 (DLPG), 142-145 (TKYD), and 172-174 (YSA). Positions 37 and 59 each coordinate Mg(2+).

Belongs to the TRAFAC class TrmE-Era-EngA-EngB-Septin-like GTPase superfamily. EngB GTPase family. Mg(2+) is required as a cofactor.

In terms of biological role, necessary for normal cell division and for the maintenance of normal septation. In Chlorobium phaeobacteroides (strain BS1), this protein is Probable GTP-binding protein EngB.